A 105-amino-acid chain; its full sequence is Phosphoribosyl-ATP pyrophosphatase (105 aa).

This sequence belongs to the PRA-PH family.

It localises to the cytoplasm. It carries out the reaction 1-(5-phospho-beta-D-ribosyl)-ATP + H2O = 1-(5-phospho-beta-D-ribosyl)-5'-AMP + diphosphate + H(+). The protein operates within amino-acid biosynthesis; L-histidine biosynthesis; L-histidine from 5-phospho-alpha-D-ribose 1-diphosphate: step 2/9. This chain is Phosphoribosyl-ATP pyrophosphatase, found in Roseobacter denitrificans (strain ATCC 33942 / OCh 114) (Erythrobacter sp. (strain OCh 114)).